Consider the following 87-residue polypeptide: UPF0248 protein TON_0940 (87 aa).

The protein belongs to the UPF0248 family.

The protein is UPF0248 protein TON_0940 of Thermococcus onnurineus (strain NA1).